The primary structure comprises 125 residues: Cysteine proteinase inhibitor 3 (125 aa).

A signal peptide spans 1–22 (MESKTFWIVTLLLCGTIQLAIC). The 89-residue stretch at 36 to 124 (GGVHDLRGNQ…KQLQEFKESS (89 aa)) folds into the Cystatin domain. A Secondary area of contact motif is present at residues 80 to 84 (QVVAG).

Belongs to the cystatin family. Phytocystatin subfamily.

Its subcellular location is the secreted. Its function is as follows. Specific inhibitor of cysteine proteinases. Probably involved in the regulation of endogenous processes and in defense against pests and pathogens. The polypeptide is Cysteine proteinase inhibitor 3 (CYS3) (Arabidopsis thaliana (Mouse-ear cress)).